The chain runs to 2065 residues: WD repeat-containing protein 81 (2065 aa).

Residues 325-617 (LCRNCQDELK…EPPHFGRVNV (293 aa)) enclose the BEACH domain. 4 disordered regions span residues 1082 to 1111 (EEEE…GGSG), 1156 to 1230 (TTVG…VEDR), 1271 to 1290 (GEKN…DSEE), and 1595 to 1642 (ASPG…GGDI). Over residues 1101-1111 (KVGGGSGGGSG) the composition is skewed to gly residues. Residues 1156 to 1169 (TTVGTKQQNQSTAN) are compositionally biased toward polar residues. A compositionally biased stretch (acidic residues) spans 1213–1228 (DGEDGGELEDEEETVE). Residues 1624-1637 (SRSPFPAPSSTSTP) are compositionally biased toward low complexity. 5 WD repeats span residues 1767 to 1806 (GHSG…DGTR), 1813 to 1853 (TYTE…NIRC), 1906 to 1945 (LSAG…VLRG), 1948 to 1986 (GHEG…PLHQ), and 2035 to 2065 (NFRG…RLLA).

Belongs to the WD repeat WDR81 family. Widely expressed.

It is found in the early endosome membrane. The protein resides in the late endosome membrane. It localises to the lysosome membrane. The protein localises to the cytoplasmic vesicle. Its subcellular location is the autophagosome membrane. It is found in the mitochondrion. The protein resides in the cytoplasm. It localises to the cytosol. Functionally, functions as a negative regulator of the PI3 kinase/PI3K activity associated with endosomal membranes. By modifying the phosphatidylinositol 3-phosphate/PtdInsP3 content of endosomal membranes may regulate endosome fusion, recycling, sorting and early to late endosome transport. May also play a role in aggrephagy, the macroautophagic degradation of ubiquitinated protein aggregates. May also be involved in maintenance of normal mitochondrial structure and organization. The protein is WD repeat-containing protein 81 (wdr81) of Danio rerio (Zebrafish).